The primary structure comprises 89 residues: MVRFTARVAGLVQGVGFRDYVRTRGRRLGLVGSATNLPDGAVEVVAEGPEPACRDLLHLLMTGHTPGRTDRVEAVWQVAQSDLTDFRRK.

The 87-residue stretch at 3 to 89 (RFTARVAGLV…QSDLTDFRRK (87 aa)) folds into the Acylphosphatase-like domain. Residues arginine 18 and asparagine 36 contribute to the active site.

This sequence belongs to the acylphosphatase family.

The catalysed reaction is an acyl phosphate + H2O = a carboxylate + phosphate + H(+). The sequence is that of Acylphosphatase (acyP) from Frankia casuarinae (strain DSM 45818 / CECT 9043 / HFP020203 / CcI3).